The chain runs to 118 residues: Co-chaperonin GroES (118 aa).

Belongs to the GroES chaperonin family. Heptamer of 7 subunits arranged in a ring. Interacts with the chaperonin GroEL.

The protein localises to the cytoplasm. Functionally, together with the chaperonin GroEL, plays an essential role in assisting protein folding. The GroEL-GroES system forms a nano-cage that allows encapsulation of the non-native substrate proteins and provides a physical environment optimized to promote and accelerate protein folding. GroES binds to the apical surface of the GroEL ring, thereby capping the opening of the GroEL channel. This chain is Co-chaperonin GroES, found in Helicobacter acinonychis (strain Sheeba).